The sequence spans 361 residues: MTPTLRRKLEALAERREELQHLLSDPDVVNNNDKFRTLSRELSQLEPVAVALEDEARAKADLSAAEAMRTDPEMRELAEEEIAAAQARLEELDTQLASLLVPRDPRDDGNLFLEVRAGTGGDEAAIFAGDLFRMYARYAERQGWKVEIESDSPGEHGGYKEVVARVVGRGAYSRLKFESGTHRVQRVPATESQGRIHTSAATVAIIPEADDVEEIVINPADLKVDTFRSSGAGGQHVNKTESAIRITHVPSGVVVECQTERSQHANRDKAMKRLKAQLLDTEHSKAAAAQAQTRKLQVGSGDRSQRIRTYSFPQGRITDHRVEGLTLYDLPNIIEGDLDALIARLLHEHQADELARLSDSP.

The residue at position 235 (Gln235) is an N5-methylglutamine.

The protein belongs to the prokaryotic/mitochondrial release factor family. Methylated by PrmC. Methylation increases the termination efficiency of RF1.

The protein resides in the cytoplasm. In terms of biological role, peptide chain release factor 1 directs the termination of translation in response to the peptide chain termination codons UAG and UAA. The polypeptide is Peptide chain release factor 1 (Xanthomonas oryzae pv. oryzae (strain MAFF 311018)).